The primary structure comprises 1730 residues: Myosin-7 (1730 aa).

The 49-residue stretch at 8 to 56 (TVGSHVWVEDPDDAWIDGEVEEVNSEEITVNCSGKTVVAKLNNVYPKDP) folds into the Myosin N-terminal SH3-like domain. The Myosin motor domain occupies 61-731 (LGVDDMTKLA…QMAEMDAHRA (671 aa)). ATP contacts are provided by residues 155 to 162 (GESGAGKT) and 208 to 216 (NNNSSRFGK). Actin-binding regions lie at residues 494–528 (LIEK…YQTF), 530–553 (NHKR…AGDV), 588–612 (FPPL…KQQL), and 612–634 (LQSL…KPNN). 4 consecutive IQ domains span residues 757-786 (LQAA…EAAS), 782-811 (REAA…SACS), 831-850 (RRAT…HQRY), and 853-882 (TKKA…AAKE). A coiled-coil region spans residues 883–1224 (TGALQDAKTK…VSDMETAEQI (342 aa)). One can recognise a Dilute domain in the interval 1327-1678 (DRIVPVFGSA…ISNLKLLLTN (352 aa)). 2 disordered regions span residues 1367-1387 (QSST…FGRM) and 1456-1520 (DSSV…SSEE). The span at 1456 to 1465 (DSSVVNSPSK) shows a compositional bias: low complexity. Residues 1475–1508 (SSEENSPKKSSEENSPKESSGDKSPQKLSDDNSP) are compositionally biased toward basic and acidic residues.

This sequence belongs to the TRAFAC class myosin-kinesin ATPase superfamily. Myosin family. Plant myosin class XI subfamily. Homodimer.

Functionally, myosin heavy chain that is required for the cell cycle-regulated transport of various organelles and proteins for their segregation. Functions by binding with its tail domain to receptor proteins on organelles and exerting force with its N-terminal motor domain against actin filaments, thereby transporting its cargo along polarized actin cables. The protein is Myosin-7 (XI-A) of Arabidopsis thaliana (Mouse-ear cress).